Here is a 605-residue protein sequence, read N- to C-terminus: Elongation factor 4 (605 aa).

The region spanning 9–192 (SRIRNFCIIA…AIIARVPSPA (184 aa)) is the tr-type G domain. GTP contacts are provided by residues 21-26 (DHGKST) and 139-142 (NKID).

This sequence belongs to the TRAFAC class translation factor GTPase superfamily. Classic translation factor GTPase family. LepA subfamily.

The protein localises to the cell inner membrane. It carries out the reaction GTP + H2O = GDP + phosphate + H(+). Its function is as follows. Required for accurate and efficient protein synthesis under certain stress conditions. May act as a fidelity factor of the translation reaction, by catalyzing a one-codon backward translocation of tRNAs on improperly translocated ribosomes. Back-translocation proceeds from a post-translocation (POST) complex to a pre-translocation (PRE) complex, thus giving elongation factor G a second chance to translocate the tRNAs correctly. Binds to ribosomes in a GTP-dependent manner. In Chlorobium phaeovibrioides (strain DSM 265 / 1930) (Prosthecochloris vibrioformis (strain DSM 265)), this protein is Elongation factor 4.